Consider the following 98-residue polypeptide: UPF0251 protein Sputw3181_3483 (98 aa).

It belongs to the UPF0251 family.

This is UPF0251 protein Sputw3181_3483 from Shewanella sp. (strain W3-18-1).